Consider the following 117-residue polypeptide: Large ribosomal subunit protein bL20c (117 aa).

The protein belongs to the bacterial ribosomal protein bL20 family.

The protein localises to the plastid. The protein resides in the chloroplast. Its function is as follows. Binds directly to 23S ribosomal RNA and is necessary for the in vitro assembly process of the 50S ribosomal subunit. It is not involved in the protein synthesizing functions of that subunit. This Populus trichocarpa (Western balsam poplar) protein is Large ribosomal subunit protein bL20c.